The primary structure comprises 100 residues: Large ribosomal subunit protein bL21 (100 aa).

It belongs to the bacterial ribosomal protein bL21 family. Part of the 50S ribosomal subunit. Contacts protein L20.

In terms of biological role, this protein binds to 23S rRNA in the presence of protein L20. This is Large ribosomal subunit protein bL21 from Mycoplasma pneumoniae (strain ATCC 29342 / M129 / Subtype 1) (Mycoplasmoides pneumoniae).